We begin with the raw amino-acid sequence, 120 residues long: rRNA-processing protein CGR1 (120 aa).

Disordered regions lie at residues 1–26 and 81–120; these read MVNE…KAEK and ERRE…LKER. Positions 47–106 form a coiled coil; that stretch reads KKQKRLEDKQFKERLKALKDEKEEARQAKITMLKERREKKEENERYERLAAKMHAKKVER. Over residues 81–96 the composition is skewed to basic and acidic residues; that stretch reads ERREKKEENERYERLA. Basic residues predominate over residues 97–113; that stretch reads AKMHAKKVERMRRREKR.

Belongs to the CGR1 family.

Its subcellular location is the nucleus. It localises to the nucleolus. Involved in nucleolar integrity and required for processing of the pre-rRNA for the 60S ribosome subunit. The polypeptide is rRNA-processing protein CGR1 (CGR1) (Saccharomyces cerevisiae (strain ATCC 204508 / S288c) (Baker's yeast)).